A 476-amino-acid chain; its full sequence is WD repeat, SAM and U-box domain-containing protein 1 (476 aa).

WD repeat units follow at residues 10–47 (DHSD…ELPY), 52–91 (GHTY…MLAV), 95–134 (PTGS…FYRS), 137–176 (VKDG…LCNE), 178–227 (AHDL…FLGG), 237–276 (GHSA…ILHT), and 279–318 (QHTR…PCAG). The 64-residue stretch at 333–396 (WSEDDVSAWL…LQKIEELRMK (64 aa)) folds into the SAM domain. Residues 403–476 (AVPDEFLCPI…ISRWLETQQK (74 aa)) enclose the U-box domain.

This chain is WD repeat, SAM and U-box domain-containing protein 1 (WDSUB1), found in Gallus gallus (Chicken).